Reading from the N-terminus, the 874-residue chain is Alanine--tRNA ligase (874 aa).

Zn(2+) contacts are provided by His562, His566, Cys664, and His668.

The protein belongs to the class-II aminoacyl-tRNA synthetase family. The cofactor is Zn(2+).

It is found in the cytoplasm. It catalyses the reaction tRNA(Ala) + L-alanine + ATP = L-alanyl-tRNA(Ala) + AMP + diphosphate. Functionally, catalyzes the attachment of alanine to tRNA(Ala) in a two-step reaction: alanine is first activated by ATP to form Ala-AMP and then transferred to the acceptor end of tRNA(Ala). Also edits incorrectly charged Ser-tRNA(Ala) and Gly-tRNA(Ala) via its editing domain. This is Alanine--tRNA ligase from Shewanella putrefaciens (strain CN-32 / ATCC BAA-453).